Consider the following 237-residue polypeptide: Ribosomal RNA small subunit methyltransferase G (237 aa).

S-adenosyl-L-methionine-binding positions include Gly-78, Phe-83, 129–130 (AE), and Arg-148.

The protein belongs to the methyltransferase superfamily. RNA methyltransferase RsmG family.

Its subcellular location is the cytoplasm. Its function is as follows. Specifically methylates the N7 position of a guanine in 16S rRNA. The protein is Ribosomal RNA small subunit methyltransferase G of Streptococcus pyogenes serotype M18 (strain MGAS8232).